The following is a 750-amino-acid chain: Catalase A (750 aa).

Residues 30-49 are disordered; sequence ERDTADAHTQQPLTTDHGVR. Residues His93 and Asn166 contribute to the active site. Tyr380 is a binding site for heme.

The protein belongs to the catalase family. Heme is required as a cofactor.

The protein resides in the peroxisome matrix. The catalysed reaction is 2 H2O2 = O2 + 2 H2O. Catalyzes the degradation of hydrogen peroxide (H(2)O(2)) generated by peroxisomal oxidases to water and oxygen, thereby protecting cells from the toxic effects of hydrogen peroxide. This chain is Catalase A (catA), found in Aspergillus fumigatus (strain ATCC MYA-4609 / CBS 101355 / FGSC A1100 / Af293) (Neosartorya fumigata).